The chain runs to 122 residues: Small ribosomal subunit protein uS13 (122 aa).

A disordered region spans residues 95-122 (GLPVRGQRTHTNARTRKGPAKSIAGKKK).

It belongs to the universal ribosomal protein uS13 family. As to quaternary structure, part of the 30S ribosomal subunit. Forms a loose heterodimer with protein S19. Forms two bridges to the 50S subunit in the 70S ribosome.

In terms of biological role, located at the top of the head of the 30S subunit, it contacts several helices of the 16S rRNA. In the 70S ribosome it contacts the 23S rRNA (bridge B1a) and protein L5 of the 50S subunit (bridge B1b), connecting the 2 subunits; these bridges are implicated in subunit movement. Contacts the tRNAs in the A and P-sites. The sequence is that of Small ribosomal subunit protein uS13 from Rhodopseudomonas palustris (strain BisB18).